Consider the following 437-residue polypeptide: Vacuolar protein sorting-associated protein 4A (437 aa).

Residues 2–80 (TTSTLQKAID…KDYLRNKEKH (79 aa)) form the MIT domain. The residue at position 8 (Lys-8) is an N6-acetyllysine. Residues 15–37 (KATEEDKAKNYEEALRLYQHAVE) are a coiled coil. The segment at 75 to 106 (RNKEKHGKKPVKENQSEGKGSDSDSEGDNPEK) is disordered. A compositionally biased stretch (basic and acidic residues) spans 84-96 (PVKENQSEGKGSD). Phosphoserine is present on residues Ser-95 and Ser-97. 167–174 (GPPGTGKS) contributes to the ATP binding site.

It belongs to the AAA ATPase family. Proposed to be monomeric or homodimeric in nucleotide-free form and to oligomerize upon binding to ATP to form two stacked hexameric or heptameric rings with a central pore through which ESCRT-III substrates are translocated in an ATP-dependent manner. Interacts with CHMP1A, CHMP1B, CHMP2A, CHMP2B, CHMP3, CHMP4A, CHMP4B, CHMP4C and CHMP6. Interacts with VPS4B; the interaction suggests a heteromeric assembly with VPS4B. Interacts with SPAST. Interacts with IST1. Interacts with ZFYVE19/ANCHR; leading to retain it at midbody. As to expression, highly expressed in testis and moderately in heart and brain. Not detected in spleen, lung, liver, skeletal muscle or kidney.

It localises to the late endosome membrane. Its subcellular location is the midbody. The protein resides in the cytoplasm. It is found in the cytoskeleton. The protein localises to the spindle. It carries out the reaction ATP + H2O = ADP + phosphate + H(+). Involved in late steps of the endosomal multivesicular bodies (MVB) pathway. Recognizes membrane-associated ESCRT-III assemblies and catalyzes their disassembly, possibly in combination with membrane fission. Redistributes the ESCRT-III components to the cytoplasm for further rounds of MVB sorting. MVBs contain intraluminal vesicles (ILVs) that are generated by invagination and scission from the limiting membrane of the endosome and mostly are delivered to lysosomes enabling degradation of membrane proteins, such as stimulated growth factor receptors, lysosomal enzymes and lipids. It is required for proper accomplishment of various processes including the regulation of endosome size, primary cilium organization, mitotic spindle organization and chromosome segregation, and nuclear envelope sealing and spindle disassembly during anaphase. In conjunction with the ESCRT machinery also appears to function in topologically equivalent membrane fission events, such as the terminal stages of cytokinesis. Involved in cytokinesis: retained at the midbody by ZFYVE19/ANCHR and CHMP4C until abscission checkpoint signaling is terminated at late cytokinesis. It is then released following dephosphorylation of CHMP4C, leading to abscission. VPS4A/B are required for the exosomal release of SDCBP, CD63 and syndecan. Critical for normal erythroblast cytokinesis and correct erythropoiesis. This Mus musculus (Mouse) protein is Vacuolar protein sorting-associated protein 4A.